Reading from the N-terminus, the 175-residue chain is MSAPPIRQPIRILGIDPGLRRTGWGVIESCGNRLVFIGCGSVEPDNDLPLASRLLEIHHGLAKVLAEFVPAEAAVEQTFVNKDAGATLKLGQARGIAMLAPALVGIAVAEYAPNLIKKTVIGAGHADKAQIQMMLKILLPKAEPKTADAADALAIAITHAHHRGGALLRLKAVQA.

Active-site residues include Asp16, Glu76, and Asp148. Mg(2+)-binding residues include Asp16, Glu76, and Asp148.

Belongs to the RuvC family. In terms of assembly, homodimer which binds Holliday junction (HJ) DNA. The HJ becomes 2-fold symmetrical on binding to RuvC with unstacked arms; it has a different conformation from HJ DNA in complex with RuvA. In the full resolvosome a probable DNA-RuvA(4)-RuvB(12)-RuvC(2) complex forms which resolves the HJ. Mg(2+) is required as a cofactor.

Its subcellular location is the cytoplasm. It catalyses the reaction Endonucleolytic cleavage at a junction such as a reciprocal single-stranded crossover between two homologous DNA duplexes (Holliday junction).. Its function is as follows. The RuvA-RuvB-RuvC complex processes Holliday junction (HJ) DNA during genetic recombination and DNA repair. Endonuclease that resolves HJ intermediates. Cleaves cruciform DNA by making single-stranded nicks across the HJ at symmetrical positions within the homologous arms, yielding a 5'-phosphate and a 3'-hydroxyl group; requires a central core of homology in the junction. The consensus cleavage sequence is 5'-(A/T)TT(C/G)-3'. Cleavage occurs on the 3'-side of the TT dinucleotide at the point of strand exchange. HJ branch migration catalyzed by RuvA-RuvB allows RuvC to scan DNA until it finds its consensus sequence, where it cleaves and resolves the cruciform DNA. In Rhodopseudomonas palustris (strain BisB18), this protein is Crossover junction endodeoxyribonuclease RuvC.